The chain runs to 44 residues: Photosystem II reaction center protein K (44 aa).

Residues 1–7 (MESLLLA) constitute a propeptide that is removed on maturation. The helical transmembrane segment at 23–43 (FPVIPVFFLLLAFVWQAAVGF) threads the bilayer.

This sequence belongs to the PsbK family. In terms of assembly, PSII is composed of 1 copy each of membrane proteins PsbA, PsbB, PsbC, PsbD, PsbE, PsbF, PsbH, PsbI, PsbJ, PsbK, PsbL, PsbM, PsbT, PsbX, PsbY, PsbZ, Psb30/Ycf12, at least 3 peripheral proteins of the oxygen-evolving complex and a large number of cofactors. It forms dimeric complexes.

It localises to the plastid. Its subcellular location is the chloroplast thylakoid membrane. In terms of biological role, one of the components of the core complex of photosystem II (PSII). PSII is a light-driven water:plastoquinone oxidoreductase that uses light energy to abstract electrons from H(2)O, generating O(2) and a proton gradient subsequently used for ATP formation. It consists of a core antenna complex that captures photons, and an electron transfer chain that converts photonic excitation into a charge separation. This chain is Photosystem II reaction center protein K, found in Thalassiosira pseudonana (Marine diatom).